The sequence spans 400 residues: Nicotinate phosphoribosyltransferase (400 aa).

H220 is modified (phosphohistidine; by autocatalysis).

Belongs to the NAPRTase family. In terms of processing, transiently phosphorylated on a His residue during the reaction cycle. Phosphorylation strongly increases the affinity for substrates and increases the rate of nicotinate D-ribonucleotide production. Dephosphorylation regenerates the low-affinity form of the enzyme, leading to product release.

It catalyses the reaction nicotinate + 5-phospho-alpha-D-ribose 1-diphosphate + ATP + H2O = nicotinate beta-D-ribonucleotide + ADP + phosphate + diphosphate. Its pathway is cofactor biosynthesis; NAD(+) biosynthesis; nicotinate D-ribonucleotide from nicotinate: step 1/1. Functionally, catalyzes the synthesis of beta-nicotinate D-ribonucleotide from nicotinate and 5-phospho-D-ribose 1-phosphate at the expense of ATP. This is Nicotinate phosphoribosyltransferase from Salmonella typhimurium (strain LT2 / SGSC1412 / ATCC 700720).